A 196-amino-acid chain; its full sequence is Proteasome subunit beta 2 (196 aa).

The propeptide at 1–6 (MEELPS) is removed in mature form; by autocatalysis. The Nucleophile role is filled by Thr-7.

Belongs to the peptidase T1B family. As to quaternary structure, the 20S proteasome core is composed of 14 alpha and 14 beta subunits that assemble into four stacked heptameric rings, resulting in a barrel-shaped structure. The two inner rings, each composed of seven catalytic beta subunits, are sandwiched by two outer rings, each composed of seven alpha subunits. The catalytic chamber with the active sites is on the inside of the barrel. Has a gated structure, the ends of the cylinder being occluded by the N-termini of the alpha-subunits. Is capped at one or both ends by the proteasome regulatory ATPase, PAN.

It is found in the cytoplasm. The enzyme catalyses Cleavage of peptide bonds with very broad specificity.. Its activity is regulated as follows. The formation of the proteasomal ATPase PAN-20S proteasome complex, via the docking of the C-termini of PAN into the intersubunit pockets in the alpha-rings, triggers opening of the gate for substrate entry. Interconversion between the open-gate and close-gate conformations leads to a dynamic regulation of the 20S proteasome proteolysis activity. Component of the proteasome core, a large protease complex with broad specificity involved in protein degradation. The polypeptide is Proteasome subunit beta 2 (Metallosphaera sedula (strain ATCC 51363 / DSM 5348 / JCM 9185 / NBRC 15509 / TH2)).